A 249-amino-acid polypeptide reads, in one-letter code: Type III pantothenate kinase (249 aa).

Asp-6 to Lys-13 serves as a coordination point for ATP. Substrate-binding positions include Tyr-93 and Gly-100–Arg-103. The active-site Proton acceptor is Asp-102. Position 122 (Asp-122) interacts with K(+). Thr-125 lines the ATP pocket. Thr-181 is a substrate binding site.

This sequence belongs to the type III pantothenate kinase family. As to quaternary structure, homodimer. NH4(+) is required as a cofactor. It depends on K(+) as a cofactor.

Its subcellular location is the cytoplasm. It catalyses the reaction (R)-pantothenate + ATP = (R)-4'-phosphopantothenate + ADP + H(+). Its pathway is cofactor biosynthesis; coenzyme A biosynthesis; CoA from (R)-pantothenate: step 1/5. Catalyzes the phosphorylation of pantothenate (Pan), the first step in CoA biosynthesis. The protein is Type III pantothenate kinase of Pseudomonas putida (strain ATCC 47054 / DSM 6125 / CFBP 8728 / NCIMB 11950 / KT2440).